The sequence spans 99 residues: UPF0122 protein UU142 (99 aa).

It belongs to the UPF0122 family.

In terms of biological role, might take part in the signal recognition particle (SRP) pathway. This is inferred from the conservation of its genetic proximity to ftsY/ffh. May be a regulatory protein. In Ureaplasma parvum serovar 3 (strain ATCC 700970), this protein is UPF0122 protein UU142.